The following is a 766-amino-acid chain: MEESNPAPTSCASKGKHSKVSDLISHFEGGSVLSSYTDVQKDSTMNLNIPQTPRQHGLTSTTPQKLPSHKSPQKQEKDSDQNQGQHGCLANGVAAAQSQMECETEKEAALSPETDTQTAAASPDAHVLNGVRNETTTDSASSVTNSHDENACDSSCRTQGTDLGLPSKEGEPVIEAELQERENGLSTEGLNPLDQHHEVKETNEQKLHKIATELLLTERAYVSRLNLLDQVFYCKLLEEANRGSFPAEMVNKIFSNISSINAFHSKFLLPELEKRMQEWETTPRIGDILQKLAPFLKMYGEYVKGFDNAVELVKNMTERVPQFKSVTEEIQKQKICGSLTLQHHMLEPIQRIPRYEMLLKDYLKKLSPDAPDWNDAKKSLEIISTAASHSNSAIRKMENLKKLLEIYEMLGEEEDIVNPSNELIKEGQILKLAARNTSAQERYLFLFNNMLLYCVPRFSLVGSKFTVRTRVGIDGMKIVETHNEEYPHTFQVSGKERTLELQASSEQDKEEWIKALQESIDAFHQRHETFRNAIAKENDIPLEVSTAELGKRAPRWIRDNEVTMCMKCKESFNALTRRRHHCRACGHVVCWKCSDYKAQLEYDGGRLNKVCKDCYQIMSGFAESEEKKRRGILEIESAEVSGNSEVCSFLQYMEKSKPWQKIWCVIPKQDPLVLYMYGAPQDVRAQATIPLLGYIVDDMPKSADLPHSFKLTQSKSVHSFAADSEELKQKWLKIILLAVTGETPDGPSEHLDTLDNLPGPKEKSEC.

Positions Met-1 to Asn-150 are actin filament-binding. 3 stretches are compositionally biased toward polar residues: residues Ser-43–Lys-65, Arg-132–Asn-145, and Cys-152–Thr-161. The segment at Ser-43–Ser-167 is disordered. Positions Lys-206–Ala-393 constitute a DH domain. Residues Glu-422–Asp-521 enclose the PH 1 domain. The FYVE-type zinc-finger motif lies at Asp-559 to Ser-619. The Zn(2+) site is built by Cys-565, Cys-568, Cys-582, Cys-585, Cys-590, Cys-593, Cys-611, and Cys-614. Residues Asn-643–Thr-740 form the PH 2 domain. Phosphoserine is present on residues Ser-702 and Ser-716. The segment at Asp-745–Cys-766 is disordered.

In terms of assembly, homooligomer. In terms of tissue distribution, detected in brain, lung, liver, skeletal muscle, kidney, testis and cultured hippocampal neurons.

The protein resides in the cytoplasm. It is found in the cytoskeleton. Its subcellular location is the cell projection. The protein localises to the filopodium. In terms of biological role, activates CDC42, a member of the Ras-like family of Rho- and Rac proteins, by exchanging bound GDP for free GTP. Plays a role in regulating the actin cytoskeleton and cell shape. Activates MAPK8. In Rattus norvegicus (Rat), this protein is FYVE, RhoGEF and PH domain-containing protein 4 (Fgd4).